A 181-amino-acid chain; its full sequence is Probable pyruvoyl-dependent arginine decarboxylase (181 aa).

Pyruvic acid (Ser) is present on Ser-43.

It belongs to the PdaD family. It depends on pyruvate as a cofactor.

It catalyses the reaction L-arginine + H(+) = agmatine + CO2. This is Probable pyruvoyl-dependent arginine decarboxylase from Chlorobium phaeovibrioides (strain DSM 265 / 1930) (Prosthecochloris vibrioformis (strain DSM 265)).